A 130-amino-acid chain; its full sequence is uncharacterized protein (130 aa).

The segment at 85–116 is disordered; sequence NDSDDDCSENDSDGDCSENDSDNDYSENESDC.

Belongs to the mimivirus L5 family.

This is an uncharacterized protein from Acanthamoeba polyphaga mimivirus (APMV).